The primary structure comprises 916 residues: Protein translocase subunit SecA (916 aa).

Residues Gln87, 105 to 109, and Asp507 contribute to the ATP site; that span reads GEGKT. 4 residues coordinate Zn(2+): Cys900, Cys902, Cys911, and His912.

Belongs to the SecA family. In terms of assembly, monomer and homodimer. Part of the essential Sec protein translocation apparatus which comprises SecA, SecYEG and auxiliary proteins SecDF-YajC and YidC. Requires Zn(2+) as cofactor.

The protein resides in the cell inner membrane. Its subcellular location is the cytoplasm. The enzyme catalyses ATP + H2O + cellular proteinSide 1 = ADP + phosphate + cellular proteinSide 2.. Functionally, part of the Sec protein translocase complex. Interacts with the SecYEG preprotein conducting channel. Has a central role in coupling the hydrolysis of ATP to the transfer of proteins into and across the cell membrane, serving both as a receptor for the preprotein-SecB complex and as an ATP-driven molecular motor driving the stepwise translocation of polypeptide chains across the membrane. This Neisseria meningitidis serogroup B (strain ATCC BAA-335 / MC58) protein is Protein translocase subunit SecA.